Reading from the N-terminus, the 257-residue chain is 7-carboxy-7-deazaguanine synthase (257 aa).

Substrate is bound by residues 29–31 (LQG) and Arg44. One can recognise a Radical SAM core domain in the interval 35-253 (LAGTPSVFVR…PRLHVALWND (219 aa)). [4Fe-4S] cluster is bound by residues Cys48, Cys52, and Cys55. Ser57 is a binding site for Mg(2+). Thr90 lines the substrate pocket. Position 92 (Gly92) interacts with S-adenosyl-L-methionine. The segment at 133–153 (VSPKLASSTPTAETDPKGDGE) is disordered.

It belongs to the radical SAM superfamily. 7-carboxy-7-deazaguanine synthase family. Homodimer. [4Fe-4S] cluster is required as a cofactor. S-adenosyl-L-methionine serves as cofactor. It depends on Mg(2+) as a cofactor.

It carries out the reaction 6-carboxy-5,6,7,8-tetrahydropterin + H(+) = 7-carboxy-7-deazaguanine + NH4(+). It participates in purine metabolism; 7-cyano-7-deazaguanine biosynthesis. In terms of biological role, catalyzes the complex heterocyclic radical-mediated conversion of 6-carboxy-5,6,7,8-tetrahydropterin (CPH4) to 7-carboxy-7-deazaguanine (CDG), a step common to the biosynthetic pathways of all 7-deazapurine-containing compounds. This is 7-carboxy-7-deazaguanine synthase from Halobacterium salinarum (strain ATCC 29341 / DSM 671 / R1).